Here is a 304-residue protein sequence, read N- to C-terminus: tRNA dimethylallyltransferase (304 aa).

16 to 23 serves as a coordination point for ATP; sequence GPTASGKS. 18-23 serves as a coordination point for substrate; sequence TASGKS. 2 interaction with substrate tRNA regions span residues 41 to 44 and 165 to 169; these read DSMQ and QRIIR.

Belongs to the IPP transferase family. As to quaternary structure, monomer. It depends on Mg(2+) as a cofactor.

It catalyses the reaction adenosine(37) in tRNA + dimethylallyl diphosphate = N(6)-dimethylallyladenosine(37) in tRNA + diphosphate. In terms of biological role, catalyzes the transfer of a dimethylallyl group onto the adenine at position 37 in tRNAs that read codons beginning with uridine, leading to the formation of N6-(dimethylallyl)adenosine (i(6)A). The chain is tRNA dimethylallyltransferase from Allorhizobium ampelinum (strain ATCC BAA-846 / DSM 112012 / S4) (Agrobacterium vitis (strain S4)).